A 335-amino-acid chain; its full sequence is MARQGVIASMHALALLLGAFAAIPTGVQSIGVCYGVNGDNLPPASDVVQLYQSNGINLLRIYFPDANPLNALSGTSIGLIMDVPNTDLASLASDPSAAAAWVQSNVQASRRSACRYIAVGNEVSGGDTGSILPAMQNLNAALANAGLGGSIKVSTAVQSDVTQGFPPSQGTFSQGYMAPSRQYLQSTGAPLLSNVYPYFSYVGNPAQIDLKYALFTSPGTVVQDGSNAYQNLFDALVDTFVSALEENAGAGNVPVVVSESGWPSAGGDAATAANAQTYNQNLINHVGQGTPKRPGPIETYIFAMFNEDQKTGAESERHFGLFNPDKSPVYPINFS.

The N-terminal stretch at 1 to 29 (MARQGVIASMHALALLLGAFAAIPTGVQS) is a signal peptide. Catalysis depends on glutamate 122, which acts as the Proton donor. Glutamate 259 serves as the catalytic Nucleophile.

Belongs to the glycosyl hydrolase 17 family. In terms of tissue distribution, accumulates in aleurone layers. Much lower levels are found in the embryo, and none in starchy endosperm.

It localises to the secreted. The protein resides in the extracellular space. It carries out the reaction Hydrolysis of (1-&gt;3)-beta-D-glucosidic linkages in (1-&gt;3)-beta-D-glucans.. In terms of biological role, is thought to be an important plant defense-related product against fungal pathogens. This is Glucan endo-1,3-beta-glucosidase, acidic isoform from Zea mays (Maize).